The sequence spans 495 residues: DNA double-strand break repair helicase HerA (495 aa).

Residues Arg142, 151 to 156, and 459 to 460 each bind ATP; these read GSGKSN and KI.

Belongs to the HerA family. As to quaternary structure, interacts with Rad50 and Mre11.

It carries out the reaction Couples ATP hydrolysis with the unwinding of duplex DNA at the replication fork by translocating in the 5'-3' direction. This creates two antiparallel DNA single strands (ssDNA). The leading ssDNA polymer is the template for DNA polymerase III holoenzyme which synthesizes a continuous strand.. It catalyses the reaction ATP + H2O = ADP + phosphate + H(+). The catalysed reaction is Couples ATP hydrolysis with the unwinding of duplex DNA by translocating in the 3'-5' direction.. ATPase activity is slightly stimulated by either circular single- or double-stranded (ds)DNA with a weak preference for dsDNA. In terms of biological role, involved in DNA double-strand break (DSB) repair. Probably acts with NurA to stimulate resection of the 5' strand and produce the long 3' single-strand that is required for RadA loading. Has DNA-dependent ATPase activity and bidirectional DNA helicase activity. Loads on either a 3' or a 5' DNA tail for subsequent DNA unwinding; has no activity on blunt-end DNA. The protein is DNA double-strand break repair helicase HerA of Sulfolobus acidocaldarius (strain ATCC 33909 / DSM 639 / JCM 8929 / NBRC 15157 / NCIMB 11770).